A 337-amino-acid chain; its full sequence is Protein XAP5 CIRCADIAN TIMEKEEPER (337 aa).

S2 bears the N-acetylserine mark. 2 coiled-coil regions span residues 13–41 (QDAV…KSAS) and 72–121 (TREE…GSSR). The segment covering 23 to 37 (KQREAERKKIQELKS) has biased composition (basic and acidic residues). A disordered region spans residues 23 to 47 (KQREAERKKIQELKSKSASGNDQSG). Residues 38-47 (KSASGNDQSG) are compositionally biased toward polar residues. A disordered region spans residues 125 to 174 (AEDFENGSDEDDGENKSSGTGNLRCGKLGKDPSVETNFLPDSEREAEEQA). Residues 126-137 (EDFENGSDEDDG) are compositionally biased toward acidic residues. S132 is modified (phosphoserine). Basic and acidic residues predominate over residues 165 to 174 (DSEREAEEQA).

It belongs to the FAM50 family. As to expression, expressed in leaves stems, flowers, roots, trichomes and hypocotyls.

The protein localises to the nucleus. Involved in light regulation of the circadian clock and photomorphogenesis. May play a global role in coordinating growth in response to the light environment. Acts as a light quality sensor directing both negative and positive transcriptional regulation. Inhibits growth in red light but promote growth in blue light. Inhibits clock gene expression in diurnal cycles. Plays no role in the control of flowering time. The chain is Protein XAP5 CIRCADIAN TIMEKEEPER (XCT) from Arabidopsis thaliana (Mouse-ear cress).